Here is a 130-residue protein sequence, read N- to C-terminus: Albumin-1 B (130 aa).

Residues 1 to 26 form the signal peptide; the sequence is MASVKLASLMVLFATLGMFLTKNVGA. Cystine bridges form between C29–C46, C33–C48, and C41–C58. Propeptides lie at residues 64–69 and 123–130; these read VFLRTN and LLKSVSTA.

In terms of processing, the C-terminal glycine may be removed from PA1b. In terms of tissue distribution, major component of both the cotyledons and embryonic axes of mature seeds.

Its function is as follows. PA1b binds to basic 7S globulin (BG) and stimulates its phosphorylation activity. Involved in the signal transduction system to regulate the growth and differentiation as a hormone peptide. Toxic to various insects through binding to a high affinity binding site in the insect gut. This is Albumin-1 B from Pisum sativum (Garden pea).